The following is a 1100-amino-acid chain: Exportin-T (1100 aa).

It belongs to the exportin family. Interacts with CEX1, GSP1, GSP2, NSP1, NUP2 and UTP8.

The protein localises to the nucleus. Its subcellular location is the cytoplasm. In terms of biological role, tRNA nucleus export receptor which facilitates tRNA translocation across the nuclear pore complex. Preferentially interacts with tRNAs with mature 5'- and 3'-termini and does not distinguish between intron-containing and spliced tRNAs. In the nucleus binds to tRNA and to the Ran-GTPases GSP1 or GSP2 in their active GTP-bound form. Docking of this trimeric complex to the nuclear pore complex (NPC) is mediated through binding to nucleoporins. Upon transit of a nuclear export complex into the cytoplasm, disassembling of the complex and hydrolysis of Ran-GTP to Ran-GDP cause release of the tRNA from the export receptor. The directionality of nuclear export is thought to be conferred by an asymmetric distribution of the GTP- and GDP-bound forms of Ran between the cytoplasm and nucleus. This Saccharomyces cerevisiae (strain ATCC 204508 / S288c) (Baker's yeast) protein is Exportin-T (LOS1).